The chain runs to 270 residues: 4-hydroxy-tetrahydrodipicolinate reductase (270 aa).

NAD(+)-binding positions include 11 to 16 and Glu-37; that span reads GAGGRM. An NADP(+)-binding site is contributed by Arg-38. NAD(+) is bound by residues 101 to 103 and 125 to 128; these read GTT and APNM. His-158 serves as the catalytic Proton donor/acceptor. Residue His-159 participates in (S)-2,3,4,5-tetrahydrodipicolinate binding. The Proton donor role is filled by Lys-162. Position 168–169 (168–169) interacts with (S)-2,3,4,5-tetrahydrodipicolinate; sequence GT.

Belongs to the DapB family.

The protein localises to the cytoplasm. It carries out the reaction (S)-2,3,4,5-tetrahydrodipicolinate + NAD(+) + H2O = (2S,4S)-4-hydroxy-2,3,4,5-tetrahydrodipicolinate + NADH + H(+). The catalysed reaction is (S)-2,3,4,5-tetrahydrodipicolinate + NADP(+) + H2O = (2S,4S)-4-hydroxy-2,3,4,5-tetrahydrodipicolinate + NADPH + H(+). It participates in amino-acid biosynthesis; L-lysine biosynthesis via DAP pathway; (S)-tetrahydrodipicolinate from L-aspartate: step 4/4. In terms of biological role, catalyzes the conversion of 4-hydroxy-tetrahydrodipicolinate (HTPA) to tetrahydrodipicolinate. This Shewanella sp. (strain W3-18-1) protein is 4-hydroxy-tetrahydrodipicolinate reductase.